The following is a 592-amino-acid chain: Bifunctional enzyme BirA/CoaX (592 aa).

Residues 1–329 (MTVLKLSHWR…ISLRSDDRPV (329 aa)) form a biotin--protein ligase region. The BPL/LPL catalytic domain occupies 83–259 (QTALKHECAS…ELDAVLLQYA (177 aa)). A type III pantothenate kinase region spans residues 336–592 (DSERFLLLDG…AAEGREYEHI (257 aa)). Residue 344–351 (DGGNSRLK) participates in ATP binding. Substrate is bound by residues tyrosine 426 and 433 to 436 (GSDR). Aspartate 435 functions as the Proton acceptor in the catalytic mechanism. ATP is bound at residue threonine 458. Residue threonine 508 coordinates substrate.

The protein in the N-terminal section; belongs to the biotin--protein ligase family. In the C-terminal section; belongs to the type III pantothenate kinase family. NH4(+) is required as a cofactor. It depends on K(+) as a cofactor.

The protein resides in the cytoplasm. It catalyses the reaction biotin + L-lysyl-[protein] + ATP = N(6)-biotinyl-L-lysyl-[protein] + AMP + diphosphate + H(+). The catalysed reaction is (R)-pantothenate + ATP = (R)-4'-phosphopantothenate + ADP + H(+). The protein operates within cofactor biosynthesis; coenzyme A biosynthesis; CoA from (R)-pantothenate: step 1/5. Its function is as follows. Activates biotin to form biotinyl-5'-adenylate and transfers the biotin moiety to biotin-accepting proteins. In terms of biological role, catalyzes the phosphorylation of pantothenate (Pan), the first step in CoA biosynthesis. The polypeptide is Bifunctional enzyme BirA/CoaX (birA/coaX) (Neisseria meningitidis serogroup B (strain ATCC BAA-335 / MC58)).